The chain runs to 396 residues: S-arrestin (396 aa).

Belongs to the arrestin family.

Arrestin is one of the major proteins of the ros (retinal rod outer segments); it binds to photoactivated-phosphorylated rhodopsin, thereby apparently preventing the transducin-mediated activation of phosphodiesterase. The protein is S-arrestin of Aquarana catesbeiana (American bullfrog).